The chain runs to 206 residues: MQLELLNDQGLATAKYEAPETVFGRAYNEDLVHQIVVAFQANARQGTRAQKDREQVKHSTKKPFKQKGTGRARAGMTSSPLWRGGGRIFPNMPDENFTQKINKKMYRAGMASILSQLAREGRLAVVDSMKVDSPKTKPLAAKFKAMNLESVLVIADEVDENLYLASRNLVNVLVVEPRYADPVSLVHYRKVIVTKAAMEKLQEMFA.

A disordered region spans residues 46–77; that stretch reads GTRAQKDREQVKHSTKKPFKQKGTGRARAGMT. Over residues 58–70 the composition is skewed to basic residues; sequence HSTKKPFKQKGTG.

It belongs to the universal ribosomal protein uL4 family. In terms of assembly, part of the 50S ribosomal subunit.

Functionally, one of the primary rRNA binding proteins, this protein initially binds near the 5'-end of the 23S rRNA. It is important during the early stages of 50S assembly. It makes multiple contacts with different domains of the 23S rRNA in the assembled 50S subunit and ribosome. Its function is as follows. Forms part of the polypeptide exit tunnel. The sequence is that of Large ribosomal subunit protein uL4 from Albidiferax ferrireducens (strain ATCC BAA-621 / DSM 15236 / T118) (Rhodoferax ferrireducens).